A 643-amino-acid chain; its full sequence is Threonine--tRNA ligase (643 aa).

The 61-residue stretch at 1-61 (MPTIKFIDGT…TNDSIVKFVY (61 aa)) folds into the TGS domain. The catalytic stretch occupies residues 244 to 535 (DHRKISKILD…LIEEYIGNFP (292 aa)). Residues cysteine 335, histidine 386, and histidine 512 each coordinate Zn(2+).

Belongs to the class-II aminoacyl-tRNA synthetase family. As to quaternary structure, homodimer. Requires Zn(2+) as cofactor.

The protein resides in the cytoplasm. It carries out the reaction tRNA(Thr) + L-threonine + ATP = L-threonyl-tRNA(Thr) + AMP + diphosphate + H(+). In terms of biological role, catalyzes the attachment of threonine to tRNA(Thr) in a two-step reaction: L-threonine is first activated by ATP to form Thr-AMP and then transferred to the acceptor end of tRNA(Thr). Also edits incorrectly charged L-seryl-tRNA(Thr). This is Threonine--tRNA ligase from Buchnera aphidicola subsp. Baizongia pistaciae (strain Bp).